The sequence spans 387 residues: 3-ketoacyl-CoA thiolase (387 aa).

Residue Cys91 is the Acyl-thioester intermediate of the active site. Catalysis depends on proton acceptor residues His343 and Cys373.

The protein belongs to the thiolase-like superfamily. Thiolase family. As to quaternary structure, heterotetramer of two alpha chains (FadB) and two beta chains (FadA).

Its subcellular location is the cytoplasm. The catalysed reaction is an acyl-CoA + acetyl-CoA = a 3-oxoacyl-CoA + CoA. Its pathway is lipid metabolism; fatty acid beta-oxidation. Its function is as follows. Catalyzes the final step of fatty acid oxidation in which acetyl-CoA is released and the CoA ester of a fatty acid two carbons shorter is formed. The protein is 3-ketoacyl-CoA thiolase of Escherichia coli O139:H28 (strain E24377A / ETEC).